The sequence spans 439 residues: Ribulose bisphosphate carboxylase/oxygenase activase 2, chloroplastic (439 aa).

A chloroplast-targeting transit peptide spans 1–58; the sequence is MATSVSTIGAANKAPLSLNNSVAGTSVPSTAFFGKTLKKVYGKGVSSPKVTNRSLRIA. 169–176 serves as a coordination point for ATP; sequence GGKGQGKS.

It belongs to the RuBisCO activase family.

It is found in the plastid. The protein resides in the chloroplast stroma. Its function is as follows. Activation of RuBisCO (ribulose-1,5-bisphosphate carboxylase/oxygenase; EC 4.1.1.39) involves the ATP-dependent carboxylation of the epsilon-amino group of lysine leading to a carbamate structure. This chain is Ribulose bisphosphate carboxylase/oxygenase activase 2, chloroplastic (RCA), found in Nicotiana tabacum (Common tobacco).